The primary structure comprises 331 residues: Eukaryotic translation initiation factor 2 subunit 2 (331 aa).

Disordered regions lie at residues 1–75 and 97–120; these read MSGD…DLNF and AIKDVKIESDAQEPAEPEDDLDIM. An N-acetylserine modification is found at Ser-2. Phosphoserine is present on residues Ser-2 and Ser-13. Positions 13 to 22 are enriched in basic residues; sequence SKKKKKKKKP. At Thr-36 the chain carries Phosphothreonine. Residues 40–51 are compositionally biased toward basic and acidic residues; sequence ETKEVEPEPTEE. Residue Ser-67 is modified to Phosphoserine. Lys-102 participates in a covalent cross-link: Glycyl lysine isopeptide (Lys-Gly) (interchain with G-Cter in SUMO2). Ser-105 is subject to Phosphoserine. A compositionally biased stretch (acidic residues) spans 106–118; sequence DAQEPAEPEDDLD. A phosphoserine mark is found at Ser-158 and Ser-216. An N6-acetyllysine mark is found at Lys-263 and Lys-291. Residues 279–303 form a C4-type zinc finger; it reads CHTCRSPDTILQKDTRLYFLQCETC.

It belongs to the eIF-2-beta/eIF-5 family. In terms of assembly, eukaryotic translation initiation factor 2 eIF2 is a heterotrimeric complex composed of an alpha (EIF2S1), a beta (EIF2S2) and a gamma (EIF2S3) chain. eIF2 is member of the 43S pre-initiation complex (43S PIC). eIF2 forms a complex with at least CELF1/CUGBP1, CALR, CALR3, EIF2S1, EIF2S2, HSP90B1 and HSPA5. Interacts with BZW2/5MP1. Interacts with EIF5.

Its subcellular location is the cytoplasm. It is found in the cytosol. Its function is as follows. Component of the eIF2 complex that functions in the early steps of protein synthesis by forming a ternary complex with GTP and initiator tRNA. This complex binds to a 40S ribosomal subunit, followed by mRNA binding to form the 43S pre-initiation complex (43S PIC). Junction of the 60S ribosomal subunit to form the 80S initiation complex is preceded by hydrolysis of the GTP bound to eIF2 and release of an eIF2-GDP binary complex. In order for eIF2 to recycle and catalyze another round of initiation, the GDP bound to eIF2 must exchange with GTP by way of a reaction catalyzed by eIF2B. The polypeptide is Eukaryotic translation initiation factor 2 subunit 2 (Eif2s2) (Mus musculus (Mouse)).